The sequence spans 459 residues: Cobyrinate a,c-diamide synthase (459 aa).

Positions 252 to 446 (TLALADDEAF…LHVHFAQRPE (195 aa)) constitute a GATase cobBQ-type domain. The active-site Nucleophile is the C334.

It belongs to the CobB/CbiA family. As to quaternary structure, monomer. Requires Mg(2+) as cofactor.

The catalysed reaction is cob(II)yrinate + 2 L-glutamine + 2 ATP + 2 H2O = cob(II)yrinate a,c diamide + 2 L-glutamate + 2 ADP + 2 phosphate + 2 H(+). The protein operates within cofactor biosynthesis; adenosylcobalamin biosynthesis; cob(II)yrinate a,c-diamide from sirohydrochlorin (anaerobic route): step 10/10. In terms of biological role, catalyzes the ATP-dependent amidation of the two carboxylate groups at positions a and c of cobyrinate, using either L-glutamine or ammonia as the nitrogen source. Is able to use other nucleotide triphosphates as substrate, such as GTP or UTP, although less efficiently than ATP. The chain is Cobyrinate a,c-diamide synthase from Salmonella typhimurium (strain LT2 / SGSC1412 / ATCC 700720).